Reading from the N-terminus, the 433-residue chain is Glutamate-1-semialdehyde 2,1-aminomutase (433 aa).

N6-(pyridoxal phosphate)lysine is present on Lys270.

This sequence belongs to the class-III pyridoxal-phosphate-dependent aminotransferase family. HemL subfamily. As to quaternary structure, homodimer. Pyridoxal 5'-phosphate is required as a cofactor.

The protein resides in the cytoplasm. The enzyme catalyses (S)-4-amino-5-oxopentanoate = 5-aminolevulinate. The protein operates within porphyrin-containing compound metabolism; protoporphyrin-IX biosynthesis; 5-aminolevulinate from L-glutamyl-tRNA(Glu): step 2/2. This Clostridium novyi (strain NT) protein is Glutamate-1-semialdehyde 2,1-aminomutase.